The primary structure comprises 123 residues: Phosphoribosyl-AMP cyclohydrolase (123 aa).

Asp81 serves as a coordination point for Mg(2+). Zn(2+) is bound at residue Cys82. 2 residues coordinate Mg(2+): Asp83 and Asp85. Zn(2+) is bound by residues Cys98 and Cys105.

The protein belongs to the PRA-CH family. In terms of assembly, homodimer. It depends on Mg(2+) as a cofactor. Zn(2+) is required as a cofactor.

It is found in the cytoplasm. It carries out the reaction 1-(5-phospho-beta-D-ribosyl)-5'-AMP + H2O = 1-(5-phospho-beta-D-ribosyl)-5-[(5-phospho-beta-D-ribosylamino)methylideneamino]imidazole-4-carboxamide. It functions in the pathway amino-acid biosynthesis; L-histidine biosynthesis; L-histidine from 5-phospho-alpha-D-ribose 1-diphosphate: step 3/9. Functionally, catalyzes the hydrolysis of the adenine ring of phosphoribosyl-AMP. This chain is Phosphoribosyl-AMP cyclohydrolase, found in Nocardioides sp. (strain ATCC BAA-499 / JS614).